The primary structure comprises 156 residues: Transcriptional repressor NrdR (156 aa).

A zinc finger lies at 3–34 (CPFCGSMDTRVLDSRPTLDGTAIRRRRECSSC). The 91-residue stretch at 49–139 (VLVVKKDGRR…VYRDFREVDQ (91 aa)) folds into the ATP-cone domain.

This sequence belongs to the NrdR family. It depends on Zn(2+) as a cofactor.

Negatively regulates transcription of bacterial ribonucleotide reductase nrd genes and operons by binding to NrdR-boxes. This Thermotoga maritima (strain ATCC 43589 / DSM 3109 / JCM 10099 / NBRC 100826 / MSB8) protein is Transcriptional repressor NrdR.